Reading from the N-terminus, the 1286-residue chain is DNA-directed RNA polymerase 147 kDa polypeptide (1286 aa).

It belongs to the poxviridae DNA-directed RNA polymerase 147 kDa subunit family. As to quaternary structure, the DNA-dependent RNA polymerase used for intermediate and late genes expression consists of eight subunits Rpo30/OPG66, Rpo7/OPG90, Rpo22/OPG103, Rpo147/OPG105, Rpo18/OPG119, Rpo19/OPG131, Rpo132/OPG151 and Rpo35/OPG156. The same holoenzyme, with the addition of the transcription-specificity factor OPG109, is used for early gene expression.

The protein localises to the virion. It carries out the reaction RNA(n) + a ribonucleoside 5'-triphosphate = RNA(n+1) + diphosphate. In terms of biological role, part of the DNA-dependent RNA polymerase which catalyzes the transcription of viral DNA into RNA using the four ribonucleoside triphosphates as substrates. Responsible for the transcription of early, intermediate and late genes. DNA-dependent RNA polymerase associates with the early transcription factor (ETF), itself composed of OPG118 and OPG133, thereby allowing the early genes transcription. Late transcription, and probably also intermediate transcription, require newly synthesized RNA polymerase. This is DNA-directed RNA polymerase 147 kDa polypeptide (OPG105) from Variola virus (isolate Human/India/Ind3/1967) (VARV).